A 216-amino-acid chain; its full sequence is MRKLISLILVIIFPYISLGLSARIAFSEKFIEWEYSRKNFPEDRWGMEKEERLKLAKLGLKAVISDKGMEEFKKARLKNGKRAFTDREVKHMEDVKRFLSFFFPSVYVLSIIWIAGVFLLRSFDVLIWSGIFNSLLLLFLGILTFTNYEKAFELFHNVVFDPYSWKFRYSDTLIRIYPMKFWYDGTLFVAILSFLFGILVLFTGILGKKFLKGKGA.

4 helical membrane passes run 5–27 (ISLI…IAFS), 98–120 (FLSF…VFLL), 125–147 (VLIW…TFTN), and 185–207 (GTLF…GILG).

It is found in the cell membrane. This is an uncharacterized protein from Aquifex aeolicus (strain VF5).